Reading from the N-terminus, the 584-residue chain is Glycosyltransferase family 92 protein Os08g0121900 (584 aa).

The span at 1–10 (MALAAKERKL) shows a compositional bias: basic and acidic residues. A disordered region spans residues 1 to 33 (MALAAKERKLSRLGSKGSGGGGGGGSFGARGQR). Over residues 16 to 28 (KGSGGGGGGGSFG) the composition is skewed to gly residues. The chain crosses the membrane as a helical span at residues 43-63 (FAAFFAFLFAGAVLFGAAHVI). The GT92 domain occupies 314–525 (HSMCVCTMLR…DKFSGRVATY (212 aa)).

Belongs to the glycosyltransferase 92 family.

It is found in the membrane. This chain is Glycosyltransferase family 92 protein Os08g0121900, found in Oryza sativa subsp. japonica (Rice).